Here is a 420-residue protein sequence, read N- to C-terminus: Histidine--tRNA ligase (420 aa).

It belongs to the class-II aminoacyl-tRNA synthetase family. As to quaternary structure, homodimer.

It is found in the cytoplasm. The enzyme catalyses tRNA(His) + L-histidine + ATP = L-histidyl-tRNA(His) + AMP + diphosphate + H(+). This Acholeplasma laidlawii (strain PG-8A) protein is Histidine--tRNA ligase.